Consider the following 294-residue polypeptide: Bifunctional protein FolD (294 aa).

Residues 176–178 (GAS), Ser-201, and Ile-242 each bind NADP(+).

This sequence belongs to the tetrahydrofolate dehydrogenase/cyclohydrolase family. In terms of assembly, homodimer.

It carries out the reaction (6R)-5,10-methylene-5,6,7,8-tetrahydrofolate + NADP(+) = (6R)-5,10-methenyltetrahydrofolate + NADPH. The enzyme catalyses (6R)-5,10-methenyltetrahydrofolate + H2O = (6R)-10-formyltetrahydrofolate + H(+). Its pathway is one-carbon metabolism; tetrahydrofolate interconversion. Functionally, catalyzes the oxidation of 5,10-methylenetetrahydrofolate to 5,10-methenyltetrahydrofolate and then the hydrolysis of 5,10-methenyltetrahydrofolate to 10-formyltetrahydrofolate. This chain is Bifunctional protein FolD, found in Bordetella petrii (strain ATCC BAA-461 / DSM 12804 / CCUG 43448).